A 315-amino-acid polypeptide reads, in one-letter code: Methionyl-tRNA formyltransferase (315 aa).

112–115 (SLLP) provides a ligand contact to (6S)-5,6,7,8-tetrahydrofolate.

The protein belongs to the Fmt family.

The enzyme catalyses L-methionyl-tRNA(fMet) + (6R)-10-formyltetrahydrofolate = N-formyl-L-methionyl-tRNA(fMet) + (6S)-5,6,7,8-tetrahydrofolate + H(+). In terms of biological role, attaches a formyl group to the free amino group of methionyl-tRNA(fMet). The formyl group appears to play a dual role in the initiator identity of N-formylmethionyl-tRNA by promoting its recognition by IF2 and preventing the misappropriation of this tRNA by the elongation apparatus. This is Methionyl-tRNA formyltransferase from Rhizobium rhizogenes (strain K84 / ATCC BAA-868) (Agrobacterium radiobacter).